The chain runs to 184 residues: Protein Iojap-related, mitochondrial (184 aa).

Residues 1–39 constitute a mitochondrion transit peptide; the sequence is MLTTLRSRCSSLLLNQSWKLAPNRIFASSPSFSSSAGIS.

It belongs to the Iojap/RsfS family.

The protein resides in the mitochondrion. Functionally, may be a ribosome silencing factor involved in organelle biogenesis and required for germination. This Arabidopsis thaliana (Mouse-ear cress) protein is Protein Iojap-related, mitochondrial.